We begin with the raw amino-acid sequence, 208 residues long: Pyridoxal 5'-phosphate synthase subunit PdxT (208 aa).

46–48 is a binding site for L-glutamine; it reads GES. The active-site Nucleophile is the cysteine 78. L-glutamine is bound by residues arginine 105 and 156-157; that span reads IR. Catalysis depends on charge relay system residues histidine 192 and glutamate 194.

Belongs to the glutaminase PdxT/SNO family. As to quaternary structure, in the presence of PdxS, forms a dodecamer of heterodimers. Only shows activity in the heterodimer.

It catalyses the reaction aldehydo-D-ribose 5-phosphate + D-glyceraldehyde 3-phosphate + L-glutamine = pyridoxal 5'-phosphate + L-glutamate + phosphate + 3 H2O + H(+). The catalysed reaction is L-glutamine + H2O = L-glutamate + NH4(+). Its pathway is cofactor biosynthesis; pyridoxal 5'-phosphate biosynthesis. Its function is as follows. Catalyzes the hydrolysis of glutamine to glutamate and ammonia as part of the biosynthesis of pyridoxal 5'-phosphate. The resulting ammonia molecule is channeled to the active site of PdxS. The protein is Pyridoxal 5'-phosphate synthase subunit PdxT of Bifidobacterium adolescentis (strain ATCC 15703 / DSM 20083 / NCTC 11814 / E194a).